The primary structure comprises 220 residues: Nucleolar protein 3 (220 aa).

Gly-2 carries the N-myristoyl glycine lipid modification. The CARD domain occupies 4–95 (VQERPSETID…MPDPAWDWQH (92 aa)). The interval 20–70 (VETLQADSGLLLDALVARGVLTGPEYEALDALPDAERRVRRLLLLVQSKGE) is essential for interaction with BAX. Residues 111–220 (GHWTPEAPSS…FQEEDESEDS (110 aa)) form a disordered region. Thr-149 carries the post-translational modification Phosphothreonine; by CK2. The span at 152–220 (EPELEAEATE…FQEEDESEDS (69 aa)) shows a compositional bias: acidic residues.

Oligomerizes (via CARD doamin). Interacts (via CARD domain) with CASP2; inhibits CASP2 activity in a phosphorylation-dependent manner. Interacts with CASP8; decreases CASP8 activity in a mitochondria localization- and phosphorylation-dependent manner and this interaction is dissociated by calcium. Interacts with TFPT; translocates NOL3 into the nucleus and negatively regulated TFPT-induced cell death. Interacts directly (via CARD domain) with FAS and FADD (via DED domain); inhibits death-inducing signaling complex (DISC) assembly by inhibiting the increase in FAS-FADD binding induced by FAS activation. Interacts (via CARD domain) with BAX (via a C-terminal 33 residues); inhibits BAX activation and translocation and consequently cytochrome c release from mitochondria. Interacts with PPM1G; may dephosphorylate NOL3. Interacts (via CARD domain) with BBC3 (via BH3 domain); preventing the association of BBC3 with BCL2 and resulting in activation of CASP8. Interacts (via CARD domain) with BAD(via BH3 domain); preventing the association of BAD with BCL2. Interacts directly (via CARD domain) with TNFRSF1A; inhibits TNF-signaling pathway. Phosphorylation at Thr-149 is required for its antiapoptotic effect by blocking death-inducing signaling complex death-inducing signaling complex (DISC) activity through the control of interaction with CASP8. Phosphorylation at Thr-149 results in translocation to mitochondria and this translocation enables the binding to CASP8. Dephosphorylated at Thr-149 by calcineurin; doesn't inhibit the association between FADD and CASP8 and the consequent apoptosis. Post-translationally, polyubiquitinated by MDM2; promoting proteasomal-dependent degradation in response to apoptotic stimuli.

The protein resides in the cytoplasm. Its subcellular location is the mitochondrion. It localises to the sarcoplasmic reticulum. The protein localises to the membrane. In terms of biological role, apoptosis repressor that blocks multiple modes of cell death. Inhibits extrinsic apoptotic pathways through two different ways. Firstly by interacting with FAS and FADD upon FAS activation blocking death-inducing signaling complex (DISC) assembly. Secondly by interacting with CASP8 in a mitochondria localization- and phosphorylation-dependent manner, limiting the amount of soluble CASP8 available for DISC-mediated activation. Inhibits intrinsic apoptotic pathway in response to a wide range of stresses, through its interaction with BAX resulting in BAX inactivation, preventing mitochondrial dysfunction and release of pro-apoptotic factors. Inhibits calcium-mediated cell death by functioning as a cytosolic calcium buffer, dissociating its interaction with CASP8 and maintaining calcium homeostasis. Negatively regulates oxidative stress-induced apoptosis by phosphorylation-dependent suppression of the mitochondria-mediated intrinsic pathway, by blocking CASP2 activation and BAX translocation. Negatively regulates hypoxia-induced apoptosis in part by inhibiting the release of cytochrome c from mitochondria in a caspase-independent manner. Also inhibits TNF-induced necrosis by preventing TNF-signaling pathway through TNFRSF1A interaction abrogating the recruitment of RIPK1 to complex I. Finally through its role as apoptosis repressor, promotes vascular remodeling through inhibition of apoptosis and stimulation of proliferation, in response to hypoxia. Inhibits too myoblast differentiation through caspase inhibition. The chain is Nucleolar protein 3 (Nol3) from Mus musculus (Mouse).